A 113-amino-acid chain; its full sequence is Iron-sulfur cluster insertion protein ErpA (113 aa).

Residues C41, C105, and C107 each coordinate iron-sulfur cluster.

The protein belongs to the HesB/IscA family. Homodimer. It depends on iron-sulfur cluster as a cofactor.

In terms of biological role, required for insertion of 4Fe-4S clusters for at least IspG. This chain is Iron-sulfur cluster insertion protein ErpA, found in Photobacterium profundum (strain SS9).